The following is a 273-amino-acid chain: Cell division cycle-associated protein 3 (273 aa).

Disordered stretches follow at residues 1-231 and 251-273; these read MGST…ALSE and GGGA…LMES. Residues S29 and S31 each carry the phosphoserine modification. A compositionally biased stretch (polar residues) spans 32–45; the sequence is AGIQRTPIQVESSP. Phosphothreonine is present on T37. 2 positions are modified to phosphoserine: S44 and S67. T75 is subject to Phosphothreonine. The segment at 90–124 is F-box-like; it reads KELSEVFETEVSETEVSESISSPVLGLPQETPLSS. S93 is modified (phosphoserine). Residues 94–105 are compositionally biased toward acidic residues; that stretch reads EVFETEVSETEV. Polar residues-rich tracts occupy residues 144 to 154 and 164 to 175; these read PWSQTELNSKQ and STETMVSGQTSD. Residue S204 is modified to Phosphoserine. T207 is modified (phosphothreonine). Residues 210-220 are compositionally biased toward polar residues; sequence QDDNSPGTLTL. S214 is modified (phosphoserine). The residue at position 217 (T217) is a Phosphothreonine. The short motif at 263-265 is the KEN box element; it reads KEN.

Interacts with SKP1. Part of a SCF (SKP1-cullin-F-box) protein ligase complex. In terms of processing, ubiquitinated and degraded by the APC/C-Cdh1 complex.

It localises to the cytoplasm. The protein localises to the cytosol. It participates in protein modification; protein ubiquitination. Functionally, F-box-like protein which is required for entry into mitosis. Acts by participating in E3 ligase complexes that mediate the ubiquitination and degradation of WEE1 kinase at G2/M phase. The sequence is that of Cell division cycle-associated protein 3 (Cdca3) from Rattus norvegicus (Rat).